The following is a 654-amino-acid chain: Arrestin domain-containing protein C (654 aa).

The region spanning 1–105 (MTQRSLKINI…AKRNLMDQWL (105 aa)) is the C2 domain. Residues 616–647 (AKRIFLKIQQIQSERQKQQEQQEQQVVSNLEA) are a coiled coil.

The protein belongs to the arrestin family.

The sequence is that of Arrestin domain-containing protein C (adcC) from Dictyostelium discoideum (Social amoeba).